The chain runs to 699 residues: Epithelial sodium channel subunit alpha (699 aa).

Positions 1 to 71 (MLDHTRAPEL…EPRQPTEEEE (71 aa)) are disordered. Residues 1–110 (MLDHTRAPEL…CSKHNRMKTA (110 aa)) are Cytoplasmic-facing. A helical transmembrane segment spans residues 111–131 (FWAVLWLCTFGMMYWQFALLF). At 132–589 (EEYFSYPVSL…SQWSLWFGSS (458 aa)) the chain is on the extracellular side. 10 disulfides stabilise this stretch: cysteine 158/cysteine 332, cysteine 256/cysteine 263, cysteine 309/cysteine 316, cysteine 421/cysteine 506, cysteine 443/cysteine 483, cysteine 443/cysteine 502, cysteine 447/cysteine 498, cysteine 456/cysteine 483, cysteine 456/cysteine 506, and cysteine 458/cysteine 472. The segment at 200–270 (RRRSTRDLRG…SDCFYQTYSS (71 aa)) is gating release of inhibition by proteolysis (GRIP); protease-sensitive region that is responsible for the proteolytic activation of the channel. Residues 211–244 (LPHPLQRLRTPPPPNPARSARSASSSVRDNNPQV) are disordered. Residues 227 to 238 (ARSARSASSSVR) show a composition bias toward low complexity. A helical transmembrane segment spans residues 590–610 (VLSVVEMAELIFDLLVITLIM). Residues 611–699 (LLHRFRSRYW…SSACAPAMAL (89 aa)) are Cytoplasmic-facing. A disordered region spans residues 637–699 (ASSFPSRFCP…SSACAPAMAL (63 aa)). Over residues 656-667 (PQQGTTPPLALT) the composition is skewed to low complexity. The short motif at 669–673 (PPPAY) is the PY motif; recruits WW domain-containing proteins and is thereby required for ubiquitination and inhibition of the channel by NEDD4 and NEDD4L element.

Belongs to the amiloride-sensitive sodium channel (TC 1.A.6) family. SCNN1A subfamily. In terms of assembly, heterotrimer; containing an alpha/SCNN1A, a beta/SCNN1B and a gamma/SCNN1G subunit. Interacts with WWP1 (via WW domains). Interacts with WWP2 (via WW domains); inhibits the channel. Interacts with BPIFA1; the interaction is indirect via SCNN1B and inhibits the proteolytic processing of SCNN1A and SCNN1G and the activation of ENaC. Interacts with the full-length immature form of PCSK9 (pro-PCSK9). Post-translationally, ubiquitinated. Can be ubiquitinated at multiple sites and undergo monoubiquitination and polyubiquitination. Ubiquitination by NEDD4 or NEDD4L inhibits the ENaC channel through endocytosis, intracellular retention and degradation of its individual subunits. ENaC is activated through the proteolytic maturation of its subunits. Furin cleaves the SCNN1A subunit, which results in a stepwise increase in the open probability of the channel due to the release of an inhibitory tract. BPIFA1, which is recruited by the SCNN1B subunit, prevents the proteolytic activation of ENaC. In terms of processing, N-glycosylated. Expressed in kidney (at protein level). Expressed in lung (at protein level). Expressed in the epididymis (at protein level). In the caput and corpus regions of the epididymis, expressed uniformly on the luminal and basal surfaces of the ducts and in the sperm in the duct lumen. Also expressed in distal colon and, at low levels, in liver.

It is found in the apical cell membrane. Its subcellular location is the cell projection. It localises to the cilium. The protein resides in the cytoplasmic granule. The protein localises to the cytoplasm. It is found in the cytoplasmic vesicle. Its subcellular location is the secretory vesicle. It localises to the acrosome. The protein resides in the flagellum. The catalysed reaction is Na(+)(in) = Na(+)(out). Originally identified and characterized by its inhibition by the diuretic drug amiloride. In terms of biological role, this is one of the three pore-forming subunits of the heterotrimeric epithelial sodium channel (ENaC), a critical regulator of sodium balance and fluid homeostasis. ENaC operates in epithelial tissues, where it mediates the electrodiffusion of sodium ions from extracellular fluid through the apical membrane of cells, with water following osmotically. It plays a key role in maintaining sodium homeostasis through electrogenic sodium reabsorption in the kidneys. Additionally, ENaC is essential for airway surface liquid homeostasis, which is crucial for proper mucus clearance. This chain is Epithelial sodium channel subunit alpha, found in Mus musculus (Mouse).